A 122-amino-acid polypeptide reads, in one-letter code: Large ribosomal subunit protein uL14 (122 aa).

It belongs to the universal ribosomal protein uL14 family. In terms of assembly, part of the 50S ribosomal subunit. Forms a cluster with proteins L3 and L19. In the 70S ribosome, L14 and L19 interact and together make contacts with the 16S rRNA in bridges B5 and B8.

In terms of biological role, binds to 23S rRNA. Forms part of two intersubunit bridges in the 70S ribosome. The polypeptide is Large ribosomal subunit protein uL14 (Alcanivorax borkumensis (strain ATCC 700651 / DSM 11573 / NCIMB 13689 / SK2)).